A 627-amino-acid chain; its full sequence is MPIQVLPPQLANQIAAGEVVERPASVVKELVENSLDAGATRIDIDIERGGAKLIRIRDNGCGIKKDELALALARHATSKIASLDDLEAIISLGFRGEALASISSVSRLTLTSRTAEQQEAWQAYAEGRDMDVTVKPAAHPVGTTLEVLDLFYNTPARRKFLRTEKTEFSHIDEIIRRIALARFDVTINLSHNGKIVRQYRAVPEGGQKERRLGAICGTAFLEQALAIEWQHGDLTLRGWVADPNHTTPALAEIQYCYVNGRMMRDRLINHAIRQACEDKLGADQQPAFVLYLEIDPHQVDVNVHPAKHEVRFHQSRLVHDFIYQGVLSVLQQQLETPLPLDDEPQPAPRAIPENRVAAGRNHFAEPAAREPVAPRYSPAPASGSRPAAPWPNAQPGYQKQQGEVYRQLLQTPAPMQKPKAPEPQEPALAANSQSFGRVLTIVHSDCALLERDGNISLLSLPVAERWLRQAQLTPGEAPVCAQPLLIPLRLKVSGEEKSALEKAQSALAELGIDFQSDAQHVTIRAVPLPLRQQNLQILIPELIGYLAKQSVFEPGNIAQWIARNLMSEHAQWIARNLMSEHAQWSMAQAITLLADVERLCPQLVKTPPGGLLQSVDLHPAIKALKDE.

Residues Phe-363–Tyr-397 form a disordered region. A compositionally biased stretch (low complexity) spans Ala-364 to Ala-387.

Belongs to the DNA mismatch repair MutL/HexB family.

In terms of biological role, this protein is involved in the repair of mismatches in DNA. It is required for dam-dependent methyl-directed DNA mismatch repair. May act as a 'molecular matchmaker', a protein that promotes the formation of a stable complex between two or more DNA-binding proteins in an ATP-dependent manner without itself being part of a final effector complex. The polypeptide is DNA mismatch repair protein MutL (Shigella flexneri serotype 5b (strain 8401)).